Consider the following 245-residue polypeptide: Adenosylcobinamide-GDP ribazoletransferase (245 aa).

Transmembrane regions (helical) follow at residues 31–51 (LLHY…AALL), 57–77 (PLLQ…ALHL), 109–129 (VAVV…LVVL), 134–154 (PAAL…LFLC), and 176–196 (ALMV…TGLL).

It belongs to the CobS family. The cofactor is Mg(2+).

It is found in the cell inner membrane. It carries out the reaction alpha-ribazole + adenosylcob(III)inamide-GDP = adenosylcob(III)alamin + GMP + H(+). It catalyses the reaction alpha-ribazole 5'-phosphate + adenosylcob(III)inamide-GDP = adenosylcob(III)alamin 5'-phosphate + GMP + H(+). It participates in cofactor biosynthesis; adenosylcobalamin biosynthesis; adenosylcobalamin from cob(II)yrinate a,c-diamide: step 7/7. In terms of biological role, joins adenosylcobinamide-GDP and alpha-ribazole to generate adenosylcobalamin (Ado-cobalamin). Also synthesizes adenosylcobalamin 5'-phosphate from adenosylcobinamide-GDP and alpha-ribazole 5'-phosphate. The sequence is that of Adenosylcobinamide-GDP ribazoletransferase from Stutzerimonas stutzeri (strain A1501) (Pseudomonas stutzeri).